A 608-amino-acid chain; its full sequence is Prolactin receptor (608 aa).

A signal peptide spans 1-19 (MSSALAYMLLVLSISLLNG). Residues 20 to 229 (QSPPGKPEIH…EIPNDFTLKD (210 aa)) lie on the Extracellular side of the membrane. Fibronectin type-III domains follow at residues 22–122 (PPGK…IVEP) and 124–224 (PPRN…IPND). Cysteine 31 and cysteine 41 are joined by a disulfide. Asparagine 54 is a glycosylation site (N-linked (GlcNAc...) asparagine). A disulfide bridge connects residues cysteine 70 and cysteine 81. N-linked (GlcNAc...) asparagine glycans are attached at residues asparagine 99 and asparagine 127. Aspartate 206 and histidine 207 together coordinate Zn(2+). The WSXWS motif signature appears at 210–214 (WSRWG). Residues 230–253 (TTVWIIVAVLSAVICLIMVWAVAL) form a helical membrane-spanning segment. Residues 254–608 (KGYSMMTCIF…DPTCFMHSFH (355 aa)) lie on the Cytoplasmic side of the membrane. The Box 1 motif motif lies at 262 to 270 (IFPPVPGPK). 3 disordered regions span residues 317 to 355 (DERL…HSLL), 377 to 419 (KPEN…TRRS), and 466 to 487 (GAKS…EKGP). The span at 318–327 (ERLMPSHSKE) shows a compositional bias: basic and acidic residues. Low complexity predominate over residues 345-354 (GHGSYDSHSL). Polar residues predominate over residues 398–408 (CHTDTSKSTTW).

The protein belongs to the type I cytokine receptor family. Type 1 subfamily. In terms of assembly, interacts with SMARCA1. Interacts with NEK3 and VAV2 and this interaction is prolactin-dependent.

The protein localises to the membrane. Functionally, this is a receptor for the anterior pituitary hormone prolactin. This is Prolactin receptor (Prlr) from Mus musculus (Mouse).